The chain runs to 651 residues: Acetyl-coenzyme A synthetase (651 aa).

CoA contacts are provided by residues 190–193, Thr-309, and Asn-333; that span reads RGGR. ATP is bound by residues 385-387, 409-414, Asp-498, and Arg-513; these read GEP and DTWWQT. Ser-521 is a binding site for CoA. Position 524 (Arg-524) interacts with ATP. Positions 535, 537, and 540 each coordinate Mg(2+). Arg-582 lines the CoA pocket. At Lys-607 the chain carries N6-acetyllysine.

Belongs to the ATP-dependent AMP-binding enzyme family. Mg(2+) serves as cofactor. In terms of processing, acetylated. Deacetylation by the SIR2-homolog deacetylase activates the enzyme.

The enzyme catalyses acetate + ATP + CoA = acetyl-CoA + AMP + diphosphate. Catalyzes the conversion of acetate into acetyl-CoA (AcCoA), an essential intermediate at the junction of anabolic and catabolic pathways. AcsA undergoes a two-step reaction. In the first half reaction, AcsA combines acetate with ATP to form acetyl-adenylate (AcAMP) intermediate. In the second half reaction, it can then transfer the acetyl group from AcAMP to the sulfhydryl group of CoA, forming the product AcCoA. This is Acetyl-coenzyme A synthetase from Xanthobacter autotrophicus (strain ATCC BAA-1158 / Py2).